A 71-amino-acid chain; its full sequence is Augerpeptide-s7a (71 aa).

A signal peptide spans 1-20 (MSALKFVLICGLVLLLIETI). The propeptide occupies 21 to 29 (PGVSLNLMR). Intrachain disulfides connect Cys36/Cys48, Cys42/Cys65, and Cys47/Cys68.

In terms of tissue distribution, expressed by the venom duct.

The protein localises to the secreted. Its function is as follows. Elicits an uncoordinated twisting syndrome when injected into C.elegans, but has no effect on mice. The protein is Augerpeptide-s7a of Terebra subulata (Chocolate spotted auger).